The following is a 423-amino-acid chain: COP9 signalosome complex subunit 3 (423 aa).

Position 2 is an N-acetylalanine (Ala2). One can recognise a PCI domain in the interval 197–365; it reads NFERALYFYE…GMVSFHDNPE (169 aa). Positions 402–423 are disordered; sequence QFVQKSMGSQEDDSGNKPSSYS. 3 positions are modified to phosphoserine: Ser407, Ser410, and Ser423.

It belongs to the CSN3 family. Component of the CSN complex, composed of COPS1/GPS1, COPS2, COPS3, COPS4, COPS5, COPS6, COPS7 (COPS7A or COPS7B), COPS8 and COPS9. In the complex, it probably interacts directly with COPS1, COPS4, COPS8 and COPS9. Interacts with CK2 and PKD. Interacts with the translation initiation factor EIF3S6 and IKBKG. Interacts with ERCC6.

It is found in the cytoplasm. The protein resides in the nucleus. Functionally, component of the COP9 signalosome complex (CSN), a complex involved in various cellular and developmental processes. The CSN complex is an essential regulator of the ubiquitin (Ubl) conjugation pathway by mediating the deneddylation of the cullin subunits of SCF-type E3 ligase complexes, leading to decrease the Ubl ligase activity of SCF-type complexes such as SCF, CSA or DDB2. The complex is also involved in phosphorylation of p53/TP53, c-jun/JUN, IkappaBalpha/NFKBIA, ITPK1 and IRF8/ICSBP, possibly via its association with CK2 and PKD kinases. CSN-dependent phosphorylation of TP53 and JUN promotes and protects degradation by the Ubl system, respectively. Essential to maintain the survival of epiblast cells and thus the development of the postimplantation embryo. In Bos taurus (Bovine), this protein is COP9 signalosome complex subunit 3 (COPS3).